The following is a 211-amino-acid chain: MGAQVNAAELLQQALSSNIIPNQEFLLQGSILDSAAENLLHRLRGLCDNVDASPETFSDIEMCFSLKLPTEKTPVMTVRVRRAQDVEAPLQLRYIGQPELGDRTRPTLVRSSLDIACTPHVIDFLTEMGFRLDFEYSTKGYMFRKGRMKITVSKILKNMTEPISQSYLVELSVLAPKGQDAIAEDMRIFAEQLKPLVQLEKIDYKRFAQMP.

The protein belongs to the Mediator complex subunit 18 family. In terms of assembly, component of the Mediator complex.

It is found in the nucleus. Functionally, component of the Mediator complex, a coactivator involved in the regulated transcription of nearly all RNA polymerase II-dependent genes. Mediator functions as a bridge to convey information from gene-specific regulatory proteins to the basal RNA polymerase II transcription machinery. Mediator is recruited to promoters by direct interactions with regulatory proteins and serves as a scaffold for the assembly of a functional preinitiation complex with RNA polymerase II and the general transcription factors. The polypeptide is Mediator of RNA polymerase II transcription subunit 18 (MED18) (Anopheles gambiae (African malaria mosquito)).